The sequence spans 816 residues: Subtilisin-like protease SBT2.6 (816 aa).

The signal sequence occupies residues 1-19 (MDIGCKVLVFFTCFLTVTA). A propeptide spans 20-126 (EIYIVTMEGE…VDRDWKVRKL (107 aa)) (activation peptide). The 103-residue stretch at 22–124 (YIVTMEGEPI…KSVDRDWKVR (103 aa)) folds into the Inhibitor I9 domain. The Peptidase S8 domain occupies 120-672 (DWKVRKLTTH…SGHVNPSAAL (553 aa)). Catalysis depends on charge relay system residues Asp160 and His235. The 75-residue stretch at 418–492 (DCQKPEVLNK…SCIPGILITD (75 aa)) folds into the PA domain. 2 N-linked (GlcNAc...) asparagine glycosylation sites follow: Asn504 and Asn578. Catalysis depends on Ser597, which acts as the Charge relay system. The N-linked (GlcNAc...) asparagine glycan is linked to Asn702.

It belongs to the peptidase S8 family.

The protein resides in the secreted. This Arabidopsis thaliana (Mouse-ear cress) protein is Subtilisin-like protease SBT2.6.